A 407-amino-acid chain; its full sequence is MKPTVWHHLRLCPHGHPDETIDDAAIAVDETGTIAWLGALSALPHGYAHWQREDLHGAWVTPGLVDCHTHLVYGGTRADEFAQRLAGVSYEEIARQGGGIVSTVRATRAADETTLFVQAAARLQPLLAEGVTAIEIKSGYGLDLASERKMLRVARQLGERFPVTVYTTFLGAHALPPEYAGRADEYIDEVCDRMLPTLADEGLVDAVDVFCERIGFSLAQTERVFEAATRRGLPVKLHAEQLSNAGGTALAARYRALSADHLEFLDEAGIEAMKAAGTVAVLLPGAYYFIRETQLPPIDLLRKHGVPIALATDHNPGTSPLESLLLTLNMGCTLFRMTVPEVLQGVTRHAAAALGRADRHGALEVGRQADFAAWSVGSLAELAYWIGRPLCEQVVRGGTPVFRRMNG.

Fe(3+) contacts are provided by H68 and H70. Zn(2+) contacts are provided by H68 and H70. Residues R77, Y140, and H173 each coordinate 4-imidazolone-5-propanoate. Residue Y140 participates in N-formimidoyl-L-glutamate binding. Residue H238 participates in Fe(3+) binding. Zn(2+) is bound at residue H238. Residue Q241 participates in 4-imidazolone-5-propanoate binding. Residue D313 coordinates Fe(3+). Residue D313 participates in Zn(2+) binding. N-formimidoyl-L-glutamate contacts are provided by N315 and G317. T318 lines the 4-imidazolone-5-propanoate pocket.

It belongs to the metallo-dependent hydrolases superfamily. HutI family. The cofactor is Zn(2+). Fe(3+) serves as cofactor.

The protein resides in the cytoplasm. It carries out the reaction 4-imidazolone-5-propanoate + H2O = N-formimidoyl-L-glutamate. It participates in amino-acid degradation; L-histidine degradation into L-glutamate; N-formimidoyl-L-glutamate from L-histidine: step 3/3. Catalyzes the hydrolytic cleavage of the carbon-nitrogen bond in imidazolone-5-propanoate to yield N-formimidoyl-L-glutamate. It is the third step in the universal histidine degradation pathway. The protein is Imidazolonepropionase of Burkholderia cenocepacia (strain HI2424).